The following is a 434-amino-acid chain: Ribitol-5-phosphate xylosyltransferase 1 (434 aa).

Residues 1-7 (MRFFRRK) lie on the Cytoplasmic side of the membrane. The helical; Signal-anchor for type II membrane protein transmembrane segment at 8 to 28 (IAIIVILAYAIFSLYAAYNVF) threads the bilayer. Residues 29-434 (FSKRVISRVH…VLEENFFKIT (406 aa)) are Extracellular-facing.

The protein belongs to the TMEM5 family.

The protein resides in the golgi apparatus membrane. The catalysed reaction is 3-O-[Rib-ol-P-Rib-ol-P-3-beta-D-GalNAc-(1-&gt;3)-beta-D-GlcNAc-(1-&gt;4)-(O-6-P-alpha-D-Man)]-Thr-[protein] + UDP-alpha-D-xylose = 3-O-[beta-D-Xyl-(1-&gt;4)-Rib-ol-P-Rib-ol-P-3-beta-D-GalNAc-(1-&gt;3)-beta-D-GlcNAc-(1-&gt;4)-(O-6-P-alpha-D-Man)]-Thr-[protein] + UDP + H(+). The protein operates within protein modification; protein glycosylation. Acts as a UDP-D-xylose:ribitol-5-phosphate beta1,4-xylosyltransferase, which catalyzes the transfer of UDP-D-xylose to ribitol 5-phosphate (Rbo5P) to form the Xylbeta1-4Rbo5P linkage on O-mannosyl glycan. Participates in the biosynthesis of the phosphorylated O-mannosyl trisaccharide (N-acetylgalactosamine-beta-3-N-acetylglucosamine-beta-4-(phosphate-6-)mannose), a carbohydrate structure present in alpha-dystroglycan (DAG1), which is required for binding laminin G-like domain-containing extracellular proteins with high affinity. The sequence is that of Ribitol-5-phosphate xylosyltransferase 1 (rxylt1) from Danio rerio (Zebrafish).